The sequence spans 215 residues: Cytochrome b6 (215 aa).

The helical transmembrane segment at 32 to 52 threads the bilayer; the sequence is IFYCIGGITFTCFLVQVATGF. Cys-35 lines the heme c pocket. Residues Gly-37, Arg-83, His-86, His-100, Arg-103, and Arg-114 each coordinate heme b. The chain crosses the membrane as a helical span at residues 90 to 110; the sequence is ASMMVLMMVLHVFRVYLTGGF. 2 consecutive transmembrane segments (helical) span residues 116–136 and 186–206; these read LTWVTGVIMAVCTVSFGVTGY and LHTFVLPLLTAVFMLMHFLMI. Positions 187 and 202 each coordinate heme b. Residues Arg-207 and Ile-211 each coordinate heme c. Ser-212 provides a ligand contact to heme b.

Belongs to the cytochrome b family. PetB subfamily. In terms of assembly, the 4 large subunits of the cytochrome b6-f complex are cytochrome b6, subunit IV (17 kDa polypeptide, PetD), cytochrome f and the Rieske protein, while the 4 small subunits are PetG, PetL, PetM and PetN. The complex functions as a dimer. Heme b is required as a cofactor. It depends on heme c as a cofactor. In terms of processing, the N-terminus is blocked.

The protein localises to the plastid. Its subcellular location is the chloroplast thylakoid membrane. Functionally, component of the cytochrome b6-f complex, which mediates electron transfer between photosystem II (PSII) and photosystem I (PSI), cyclic electron flow around PSI, and state transitions. This chain is Cytochrome b6, found in Chlamydomonas reinhardtii (Chlamydomonas smithii).